Reading from the N-terminus, the 533-residue chain is Cytochrome P450 monooxygenase ltmK (533 aa).

A helical membrane pass occupies residues 27–47 (VHWLQVIVALLVLIVCIFLYW). Residue Asn-116 is glycosylated (N-linked (GlcNAc...) asparagine). Position 473 (Cys-473) interacts with heme. N-linked (GlcNAc...) asparagine glycosylation occurs at Asn-528.

Belongs to the cytochrome P450 family. Heme is required as a cofactor.

It is found in the membrane. Its pathway is secondary metabolite biosynthesis. Its function is as follows. Cytochrome P450 monooxygenase; part of the gene clusters that mediates the biosynthesis of lolitrems, indole-diterpene mycotoxins that are potent tremorgens in mammals, and are synthesized by clavicipitaceous fungal endophytes in association with their grass hosts. The geranylgeranyl diphosphate (GGPP) synthase ltmG is proposed to catalyze the first step in lolitrem biosynthesis. LtmG catalyzes a series of iterative condensations of isopentenyl diphosphate (IPP) with dimethylallyl diphosphate (DMAPP), geranyl diphosphate (GPP), and farnesyl diphosphate (FPP), to form GGPP. GGPP then condenses with indole-3-glycerol phosphate to form 3-geranylgeranylindole, an acyclic intermediate, to be incorporated into paxilline. Either ltmG or ltmC could be responsible for this step, as both are putative prenyl transferases. The FAD-dependent monooxygenase ltmM then catalyzes the epoxidation of the two terminal alkenes of the geranylgeranyl moiety, which is subsequently cyclized by ltmB, to paspaline. The cytochrome P450 monooxygenases ltmQ and ltmP can sequentially oxidize paspaline to terpendole E and terpendole F. Alternatively, ltmP converts paspaline to an intermediate which is oxidized by ltmQ to terpendole F. LtmF, ltmK, ltmE and ltmJ appear to be unique to the epichloe endophytes. The prenyltransferase ltmF is involved in the 27-hydroxyl-O-prenylation. The cytochrome P450 monooxygenase ltmK is required for the oxidative acetal ring formation. The multi-functional prenyltransferase ltmE is required for C20- and C21-prenylations of the indole ring of paspalanes and acts together with the cytochrome P450 monooxygenase ltmJ to yield lolitremanes by multiple oxidations and ring closures. The stereoisomer pairs of lolitriol and lolitrem N or lolitrem B and lolitrem F may be attributed to variations in the way in which ring closure can occur under the action of ltmJ. While the major product of this pathway is lolitrem B, the prenyl transferases and cytochrome P450 monooxygenases identified in this pathway have a remarkable versatility in their regio- and stereo-specificities to generate a diverse range of metabolites that are products of a metabolic grid rather than a linear pathway. This Epichloe festucae var. lolii (Neotyphodium lolii) protein is Cytochrome P450 monooxygenase ltmK.